The following is a 282-amino-acid chain: Probable protein phosphatase 2C 45 (282 aa).

Residues 27–272 (SYGYASSPGK…DNITCVVVRF (246 aa)) form the PPM-type phosphatase domain. 4 residues coordinate Mn(2+): Asp63, Gly64, Asp224, and Asp263.

Belongs to the PP2C family. Requires Mg(2+) as cofactor. It depends on Mn(2+) as a cofactor.

It carries out the reaction O-phospho-L-seryl-[protein] + H2O = L-seryl-[protein] + phosphate. The catalysed reaction is O-phospho-L-threonyl-[protein] + H2O = L-threonyl-[protein] + phosphate. The protein is Probable protein phosphatase 2C 45 of Oryza sativa subsp. japonica (Rice).